Consider the following 420-residue polypeptide: ATP phosphoribosyltransferase regulatory subunit (420 aa).

This sequence belongs to the class-II aminoacyl-tRNA synthetase family. HisZ subfamily. In terms of assembly, heteromultimer composed of HisG and HisZ subunits.

The protein localises to the cytoplasm. It participates in amino-acid biosynthesis; L-histidine biosynthesis; L-histidine from 5-phospho-alpha-D-ribose 1-diphosphate: step 1/9. In terms of biological role, required for the first step of histidine biosynthesis. May allow the feedback regulation of ATP phosphoribosyltransferase activity by histidine. The sequence is that of ATP phosphoribosyltransferase regulatory subunit from Bacillus cereus (strain ATCC 14579 / DSM 31 / CCUG 7414 / JCM 2152 / NBRC 15305 / NCIMB 9373 / NCTC 2599 / NRRL B-3711).